A 247-amino-acid polypeptide reads, in one-letter code: Triosephosphate isomerase (247 aa).

Substrate is bound at residue 8–10 (NWK). Catalysis depends on histidine 94, which acts as the Electrophile. Glutamate 165 serves as the catalytic Proton acceptor. Residues glycine 171 and serine 210 each coordinate substrate.

Belongs to the triosephosphate isomerase family. Homodimer.

It is found in the cytoplasm. The catalysed reaction is D-glyceraldehyde 3-phosphate = dihydroxyacetone phosphate. It participates in carbohydrate biosynthesis; gluconeogenesis. It functions in the pathway carbohydrate degradation; glycolysis; D-glyceraldehyde 3-phosphate from glycerone phosphate: step 1/1. Functionally, involved in the gluconeogenesis. Catalyzes stereospecifically the conversion of dihydroxyacetone phosphate (DHAP) to D-glyceraldehyde-3-phosphate (G3P). The sequence is that of Triosephosphate isomerase from Aquifex aeolicus (strain VF5).